A 138-amino-acid chain; its full sequence is Putative acyl-CoA thioesterase YneP (138 aa).

Residue D16 is part of the active site.

The protein belongs to the 4-hydroxybenzoyl-CoA thioesterase family.

Its function is as follows. Has acyl-CoA thioesterase activity. The polypeptide is Putative acyl-CoA thioesterase YneP (yneP) (Bacillus subtilis (strain 168)).